A 122-amino-acid polypeptide reads, in one-letter code: MARIAGVNIPTAKRVVIALTYIHGIGPKFAQEIVEKVGIPAERRVHQLTDAEVLQIRETIDRDYQVEGDLRRETAMNIKRLMDLGCYRGLRHRRGLPVRGQRTHTNARTRKGPAKAIAGKKK.

The disordered stretch occupies residues 99–122; sequence RGQRTHTNARTRKGPAKAIAGKKK.

It belongs to the universal ribosomal protein uS13 family. In terms of assembly, part of the 30S ribosomal subunit. Forms a loose heterodimer with protein S19. Forms two bridges to the 50S subunit in the 70S ribosome.

In terms of biological role, located at the top of the head of the 30S subunit, it contacts several helices of the 16S rRNA. In the 70S ribosome it contacts the 23S rRNA (bridge B1a) and protein L5 of the 50S subunit (bridge B1b), connecting the 2 subunits; these bridges are implicated in subunit movement. Contacts the tRNAs in the A and P-sites. In Rhizobium etli (strain ATCC 51251 / DSM 11541 / JCM 21823 / NBRC 15573 / CFN 42), this protein is Small ribosomal subunit protein uS13.